A 181-amino-acid polypeptide reads, in one-letter code: Adenylate kinase (181 aa).

10-15 (GAGKGT) serves as a coordination point for ATP. An NMP region spans residues 30–59 (STGELFRSNIENGTKLGLEAKRYLDAGDLV). Residues Thr-31, Arg-36, 57-59 (DLV), 85-88 (GFPR), and Gln-92 each bind AMP. The segment at 126-132 (ARGRADD) is LID. Arg-127 contributes to the ATP binding site. Residues Arg-129 and Arg-140 each coordinate AMP. Gly-166 contacts ATP.

Belongs to the adenylate kinase family. As to quaternary structure, monomer.

Its subcellular location is the cytoplasm. The enzyme catalyses AMP + ATP = 2 ADP. It functions in the pathway purine metabolism; AMP biosynthesis via salvage pathway; AMP from ADP: step 1/1. Catalyzes the reversible transfer of the terminal phosphate group between ATP and AMP. Plays an important role in cellular energy homeostasis and in adenine nucleotide metabolism. The chain is Adenylate kinase from Mycolicibacterium paratuberculosis (strain ATCC BAA-968 / K-10) (Mycobacterium paratuberculosis).